A 355-amino-acid polypeptide reads, in one-letter code: RNA 3'-terminal phosphate cyclase (355 aa).

ATP is bound by residues Q109 and 291 to 295; that span reads HLADQ. H316 (tele-AMP-histidine intermediate) is an active-site residue.

This sequence belongs to the RNA 3'-terminal cyclase family. Type 1 subfamily.

It is found in the cytoplasm. It carries out the reaction a 3'-end 3'-phospho-ribonucleotide-RNA + ATP = a 3'-end 2',3'-cyclophospho-ribonucleotide-RNA + AMP + diphosphate. Its function is as follows. Catalyzes the conversion of 3'-phosphate to a 2',3'-cyclic phosphodiester at the end of RNA. The mechanism of action of the enzyme occurs in 3 steps: (A) adenylation of the enzyme by ATP; (B) transfer of adenylate to an RNA-N3'P to produce RNA-N3'PP5'A; (C) and attack of the adjacent 2'-hydroxyl on the 3'-phosphorus in the diester linkage to produce the cyclic end product. The biological role of this enzyme is unknown but it is likely to function in some aspects of cellular RNA processing. The sequence is that of RNA 3'-terminal phosphate cyclase from Koribacter versatilis (strain Ellin345).